We begin with the raw amino-acid sequence, 178 residues long: 3-hydroxyacyl-[acyl-carrier-protein] dehydratase FabZ (178 aa).

H54 is an active-site residue.

Belongs to the thioester dehydratase family. FabZ subfamily.

The protein resides in the cytoplasm. It catalyses the reaction a (3R)-hydroxyacyl-[ACP] = a (2E)-enoyl-[ACP] + H2O. In terms of biological role, involved in unsaturated fatty acids biosynthesis. Catalyzes the dehydration of short chain beta-hydroxyacyl-ACPs and long chain saturated and unsaturated beta-hydroxyacyl-ACPs. The chain is 3-hydroxyacyl-[acyl-carrier-protein] dehydratase FabZ from Yersinia enterocolitica.